The primary structure comprises 91 residues: Potassium channel toxin TtrKIK (91 aa).

The first 25 residues, 1 to 25 (MVATNRCCVFALLFALLLVHSLTEA), serve as a signal peptide directing secretion. Residues 26–44 (GKGKEVLGKIKDKLIEAKD) constitute a propeptide that is removed on maturation. The BetaSPN-type CS-alpha/beta domain occupies 58 to 91 (EYACPAIEKFCEDHCAAKKAVGKCDDFKCNCIKL). Intrachain disulfides connect C61-C81, C68-C86, and C72-C88.

The protein belongs to the long chain scorpion toxin family. Class 2 subfamily. As to expression, expressed by the venom gland.

The protein localises to the secreted. The full peptide presents antibacterial and cytotoxic activities. The synthetic C-terminus (AA 33-76) inhibits voltage-gated potassium channels Kv1.1/KCNA1, Kv1.2/KCNA2, and Kv1.3/KCNA3. The polypeptide is Potassium channel toxin TtrKIK (Tityus trivittatus (Argentinean scorpion)).